The sequence spans 316 residues: dTDP-4-dehydro-6-deoxyglucose reductase (316 aa).

Phenylalanine 16 to isoleucine 17 contacts NAD(+). The Proton acceptor role is filled by tyrosine 151. NAD(+) is bound at residue lysine 155.

The protein belongs to the NAD(P)-dependent epimerase/dehydratase family.

It carries out the reaction dTDP-alpha-D-fucose + NAD(+) = dTDP-4-dehydro-6-deoxy-alpha-D-glucose + NADH + H(+). It catalyses the reaction dTDP-alpha-D-fucose + NADP(+) = dTDP-4-dehydro-6-deoxy-alpha-D-glucose + NADPH + H(+). The protein operates within bacterial outer membrane biogenesis; LPS O-antigen biosynthesis. Inhibited by Cu(2+), while other divalent cations such as Ca(2+), Co(2+), Fe(2+), Mn(2+) and Mg(2+) have no obvious effects on enzyme activity. In terms of biological role, catalyzes the stereospecific reduction of the C-4 keto group of dTDP-4-dehydro-6-deoxy-D-glucose, leading to dTDP-D-fucopyranose. This is a step in the biosynthesis of D-fucofuranose, a component of E.coli O52 O antigen. Is more efficient using NADH than NADPH as cosubstrate. The protein is dTDP-4-dehydro-6-deoxyglucose reductase (fcf1) of Escherichia coli.